A 1342-amino-acid chain; its full sequence is DNA-directed RNA polymerase subunit beta (1342 aa).

It belongs to the RNA polymerase beta chain family. As to quaternary structure, the RNAP catalytic core consists of 2 alpha, 1 beta, 1 beta' and 1 omega subunit. When a sigma factor is associated with the core the holoenzyme is formed, which can initiate transcription.

The catalysed reaction is RNA(n) + a ribonucleoside 5'-triphosphate = RNA(n+1) + diphosphate. In terms of biological role, DNA-dependent RNA polymerase catalyzes the transcription of DNA into RNA using the four ribonucleoside triphosphates as substrates. The protein is DNA-directed RNA polymerase subunit beta of Aliivibrio fischeri (strain MJ11) (Vibrio fischeri).